Here is a 512-residue protein sequence, read N- to C-terminus: Cytochrome P450 monooxygenase cheE (512 aa).

Residues 5 to 27 (YFAAESSWSPYVILVLALAAMVA) form a helical membrane-spanning segment. N-linked (GlcNAc...) asparagine glycans are attached at residues N53, N124, and N168. C455 provides a ligand contact to heme. N-linked (GlcNAc...) asparagine glycosylation is found at N499 and N508.

It belongs to the cytochrome P450 family. Requires heme as cofactor.

It localises to the membrane. It participates in secondary metabolite biosynthesis. Functionally, cytochrome P450 monooxygenase; part of the gene cluster that mediates the biosynthesis of chaetoglobosin A which has a unique inhibitory activity against actin polymerization in mammalian cells. Chaetoglobosin A and its intermediates are involved in the morphological differentiation of C.globosum. The first step of the pathway is the synthesis of prochaetoglobosin I via condensation of one acetyl-CoA, 8 malonyl-CoA, and a L-tryptophan molecule by the PKS-NRPS hybrid synthetase cheA, followed by reduction of backbone double bond to install desired geometry by the enoyl reductase cheB. Further multiple oxidation steps performed by the cytochrome P450 monooxygenases cheE and cheG, as well as by the FAD-linked oxidoreductase cheF, lead to the formation of chaetoglobosin A. Depending on the order of action of these reductases, distinct intermediates can be identified. Within the pathway, the cytochrome P450 monooxygenase cheE catalyzes a stereospecific epoxidation on prochaetoglobosin I, cytoglobosin D, and chaetoglobosin J intermediates. The FAD-linked oxidoreductase cheF performs dehydrogenation of the C-20 hydroxyl groups in the 20-dihyrochaetoglobosin A and cytoglobosin D intermediates. Finally, the cytochrome P450 monooxygenase cheG can catalyze the stereospecific dihydroxylation of prochaetoglobosin I and prochaetoglobosin IV at C-19 and C-20, respectively. The Diels-Alderase cheD may play a role in the post-PKS-NRPS biosynthetic steps catalyzing Diels-Alder cyclization. In Chaetomium globosum (strain ATCC 6205 / CBS 148.51 / DSM 1962 / NBRC 6347 / NRRL 1970) (Soil fungus), this protein is Cytochrome P450 monooxygenase cheE.